The sequence spans 169 residues: Endoribonuclease YbeY (169 aa).

Zn(2+)-binding residues include His-128, His-132, and His-138.

Belongs to the endoribonuclease YbeY family. The cofactor is Zn(2+).

The protein resides in the cytoplasm. In terms of biological role, single strand-specific metallo-endoribonuclease involved in late-stage 70S ribosome quality control and in maturation of the 3' terminus of the 16S rRNA. The sequence is that of Endoribonuclease YbeY from Cyanothece sp. (strain PCC 7425 / ATCC 29141).